A 560-amino-acid polypeptide reads, in one-letter code: Beta-hexosaminidase subunit B1 (560 aa).

The signal sequence occupies residues 1–25; that stretch reads MIILKRNIVFLLIIIIVLGIFIATS. N-linked (GlcNAc...) asparagine glycans are attached at residues Asn59, Asn69, Asn81, Asn99, Asn161, Asn293, and Asn346. Glu359 acts as the Proton donor in catalysis. 4 N-linked (GlcNAc...) asparagine glycosylation sites follow: Asn366, Asn436, Asn472, and Asn547.

It belongs to the glycosyl hydrolase 20 family.

It is found in the lysosome. The enzyme catalyses Hydrolysis of terminal non-reducing N-acetyl-D-hexosamine residues in N-acetyl-beta-D-hexosaminides.. Functionally, responsible for the degradation of GM2 gangliosides, and a variety of other molecules containing terminal N-acetyl hexosamines. This chain is Beta-hexosaminidase subunit B1 (hexb1), found in Dictyostelium discoideum (Social amoeba).